We begin with the raw amino-acid sequence, 184 residues long: Potassium-transporting ATPase KdpC subunit (184 aa).

The chain crosses the membrane as a helical span at residues 10 to 30; sequence LTFLMVVLFAVIYPLAIYGIA.

Belongs to the KdpC family. As to quaternary structure, the system is composed of three essential subunits: KdpA, KdpB and KdpC.

Its subcellular location is the cell inner membrane. Functionally, part of the high-affinity ATP-driven potassium transport (or Kdp) system, which catalyzes the hydrolysis of ATP coupled with the electrogenic transport of potassium into the cytoplasm. This subunit acts as a catalytic chaperone that increases the ATP-binding affinity of the ATP-hydrolyzing subunit KdpB by the formation of a transient KdpB/KdpC/ATP ternary complex. This Flavobacterium psychrophilum (strain ATCC 49511 / DSM 21280 / CIP 103535 / JIP02/86) protein is Potassium-transporting ATPase KdpC subunit.